The following is a 386-amino-acid chain: N-acetylneuraminate epimerase (386 aa).

Residues 1-29 (MGMQMKNFKKMMTLMALCLSVAITTSGYA) form the signal peptide. 7 Kelch repeats span residues 51-95 (VIYV…VFLN), 97-149 (ELYV…VKLN), 151-186 (TMVLITGGVNEHIFDKYFIDIAAAAADESEKNKVIY), 187-232 (NYFN…VMEN), 235-284 (LMLI…LAGA), 306-355 (QNYT…SYGD), and 357-386 (VFLIGGENAKGKPVSSVTSFTMRDGNLLIK). The active-site Proton acceptor is the glutamate 241.

This sequence belongs to the NanM family. In terms of assembly, homodimer.

It localises to the periplasm. The catalysed reaction is N-acetyl-alpha-neuraminate = N-acetyl-beta-neuraminate. In terms of biological role, converts alpha-N-acetylneuranimic acid (Neu5Ac) to the beta-anomer, accelerating the equilibrium between the alpha- and beta-anomers. Probably facilitates sialidase-negative bacteria to compete successfully for limited amounts of extracellular Neu5Ac, which is likely taken up in the beta-anomer. In addition, the rapid removal of sialic acid from solution might be advantageous to the bacterium to damp down host responses. The chain is N-acetylneuraminate epimerase from Salmonella choleraesuis (strain SC-B67).